We begin with the raw amino-acid sequence, 360 residues long: DNA replication and repair protein RecF (360 aa).

Residue 30–37 (GANGSGKT) participates in ATP binding.

This sequence belongs to the RecF family.

It is found in the cytoplasm. The RecF protein is involved in DNA metabolism; it is required for DNA replication and normal SOS inducibility. RecF binds preferentially to single-stranded, linear DNA. It also seems to bind ATP. In Acinetobacter baumannii (strain AB307-0294), this protein is DNA replication and repair protein RecF.